The following is a 790-amino-acid chain: MLHEARDRQKFVSDVQYLRDMQHKVDSEYQACLKRQEHKKEPNEKKQEQLWGKDTSDRSRFSSGSSCKQSSGEEDSLSEARLATKAPTAKCEPKLPAIDQTSVKQKHKGTMTLKKPEKVSPSKPSAVAQATKILSRKRRPNLGRLTVSPEMHSPRLSGERSRQKAQLSTKTSGLLGADPVVQQDSLLSANEMKLKRPAREKRNLAPSSQLVRVAGKAPLERQKKGDPSARPQNEPHTALSQTFQPMSGSQVLTESSVPPFLPATVVGPRRAPFRFHDEDFYSALSLNNEQENYDTEEETRTEEELLLAGMRSPPSYKRSRFLGTSAAQNRNVEENAENLRGNSLRRSEPNPGSPRKTSVTEPTTKQSSPGQRMLQDTRLPRELAKDNPSGDQDEKTPVPGDAKSDGVTQVSAEDVSNNCAVEDRSAVHNCERDWQRYLSGSRNSFDCLLSGRPTAPRASVNPSYNAHGSLFHSAVIDDIPASLSVSSILVPSAELEENLRFNVRRPLSPIRNRNPSAASESHSEDTQGEEERASTSQAQESPLLSDLPNPQSSMALGDSPSSPTRRHLQGHFYMPGSLQENIPFTFFAVSDFASQNDNGTSVRVSGVMDEKATEIKADPEKLRKLQESLLEEDSEEEGDLCRICQIAGGSPANPLLEPCGCVGSLQFVHQECLKKWLKVKITSGADLSTVKTCEMCKQGLLVDLDDFNMTEFYHKHQQSRAQSELMNSGLYLVLLLHLYEQRFAELMTLNYRRASRERMSRNYPQPRPEESESSESGDGNESNVYPGRVI.

The segment at 33-240 (LKRQEHKKEP…PQNEPHTALS (208 aa)) is disordered. Residues 34-48 (KRQEHKKEPNEKKQE) show a composition bias toward basic and acidic residues. Positions 61-70 (FSSGSSCKQS) are enriched in low complexity. Ser-78 is subject to Phosphoserine. Positions 218–227 (PLERQKKGDP) are enriched in basic and acidic residues. Residues 230-240 (RPQNEPHTALS) are compositionally biased toward polar residues. A coiled-coil region spans residues 284-308 (LSLNNEQENYDTEEETRTEEELLLA). Disordered stretches follow at residues 323–416 (GTSA…EDVS) and 507–569 (LSPI…RHLQ). Polar residues-rich tracts occupy residues 355-370 (RKTSVTEPTTKQSSPG), 406-416 (GVTQVSAEDVS), and 511-520 (RNRNPSAASE). The segment covering 521–533 (SHSEDTQGEEERA) has biased composition (basic and acidic residues). Residues 534-563 (STSQAQESPLLSDLPNPQSSMALGDSPSSP) are compositionally biased toward polar residues. Residues 633 to 703 (DSEEEGDLCR…EMCKQGLLVD (71 aa)) form an RING-CH-type zinc finger. 8 residues coordinate Zn(2+): Cys-641, Cys-644, Cys-659, Cys-661, His-669, Cys-672, Cys-693, and Cys-696. Positions 757 to 790 (ERMSRNYPQPRPEESESSESGDGNESNVYPGRVI) are disordered. The span at 774–783 (SESGDGNESN) shows a compositional bias: low complexity.

The enzyme catalyses S-ubiquitinyl-[E2 ubiquitin-conjugating enzyme]-L-cysteine + [acceptor protein]-L-lysine = [E2 ubiquitin-conjugating enzyme]-L-cysteine + N(6)-ubiquitinyl-[acceptor protein]-L-lysine.. The protein operates within protein modification; protein ubiquitination. In terms of biological role, E3 ubiquitin-protein ligase. E3 ubiquitin ligases accept ubiquitin from an E2 ubiquitin-conjugating enzyme in the form of a thioester and then directly transfer the ubiquitin to targeted substrates. This Rattus norvegicus (Rat) protein is Probable E3 ubiquitin-protein ligase MARCHF10 (Marchf10).